The following is a 282-amino-acid chain: Phenylethanolamine N-methyltransferase (282 aa).

Position 7 is a phosphoserine (Ser7). S-adenosyl-L-methionine is bound by residues Tyr35, Tyr40, 79-80 (GS), Tyr85, Asp101, Asn106, 158-159 (DV), and Ala181. Residues Glu219 and Asp267 each contribute to the octopamine site.

It carries out the reaction phenylethanolamine + S-adenosyl-L-methionine = N-methylphenylethanolamine + S-adenosyl-L-homocysteine + H(+). The enzyme catalyses (R)-noradrenaline + S-adenosyl-L-methionine = (R)-adrenaline + S-adenosyl-L-homocysteine + H(+). The catalysed reaction is (R)-normetanephrine + S-adenosyl-L-methionine = (R)-metanephrine + S-adenosyl-L-homocysteine + H(+). It catalyses the reaction (R)-octopamine + S-adenosyl-L-methionine = (R)-synephrine + S-adenosyl-L-homocysteine + H(+). It participates in catecholamine biosynthesis; (R)-adrenaline biosynthesis; (R)-adrenaline from (R)-noradrenaline: step 1/1. Its activity is regulated as follows. Inhibited by methyl methanethiosulfonate, phenylglyoxal, tetranitromethane and diethyl pyrocarbonate. Inhibited by 4-oxo-1,4-dihydro-quinoline-3,7-dicarboxylic acid, 4-(benzo[d][1,3]dioxol-5-ylamino)-4-oxobutanoic acid and 1,4-diaminonaphthalene-2,6-disulfonic acid. Functionally, catalyzes the transmethylation of nonepinephrine (noradrenaline) to form epinephrine (adrenaline), using S-adenosyl-L-methionine as the methyl donor. Other substrates include phenylethanolamine and octopamine. Also methylates normetanephrine. The chain is Phenylethanolamine N-methyltransferase (PNMT) from Homo sapiens (Human).